The chain runs to 159 residues: Trafficking protein particle complex subunit BET5 (159 aa).

Belongs to the TRAPP small subunits family. BET5 subfamily. As to quaternary structure, part of the multisubunit TRAPP (transport protein particle) I complex composed of BET3, BET5, TRS20, TRS23, TRS31 and TRS33. Part of the multisubunit TRAPP (transport protein particle) II complex composed of BET3, BET5, TRS20, TRS23, TRS31, TRS33, TRS65, TRS85, TRS120 and TRS130. Part of the multisubunit TRAPP (transport protein particle) III complex composed of BET3, BET5, TRS20, TRS23, TRS31, TRS33 and TRS85.

It localises to the golgi apparatus. The protein localises to the cis-Golgi network. It is found in the endoplasmic reticulum. The protein resides in the preautophagosomal structure. Component of the TRAPP I, TRAPP II and TRAPP III complexes which act as guanine nucleotide exchange factors (GEF) for YPT1. TRAPP I plays a key role in the late stages of endoplasmic reticulum to Golgi traffic. TRAPP II plays a role in intra-Golgi transport. TRAPP III plays a role in autophagosome formation. Required for sporulation. Has a role late in meiosis following DNA replication. The protein is Trafficking protein particle complex subunit BET5 (BET5) of Saccharomyces cerevisiae (strain ATCC 204508 / S288c) (Baker's yeast).